The chain runs to 1523 residues: WD repeat-containing protein 62 (1523 aa).

The residue at position 2 (Ala-2) is an N-acetylalanine. Ser-33 carries the phosphoserine modification. Thr-46 carries the post-translational modification Phosphothreonine. 12 WD repeats span residues 109–150 (TTRK…QVAE), 153–194 (GHKY…VVAS), 196–234 (KVSC…EAKV), 291–330 (INLK…YLTN), 357–396 (AVYP…EVSK), 411–450 (EVYP…DTRW), 490–529 (DMKA…ELIK), 532–574 (AHDA…NLEQ), 578–618 (DHSS…DGLH), 626–665 (AEKT…QKKC), 671–713 (GDEG…KMFG), and 714–752 (HSEI…TTCM). Ser-501 is modified (phosphoserine). The disordered stretch occupies residues 762–824 (QEQQQQPKDQ…PSKDSLDPDP (63 aa)). Residues 776-790 (PPSQETYASTPSEIR) are compositionally biased toward polar residues. Positions 797 to 809 (QTEDEMEEECEPE) are enriched in acidic residues. The WD 13 repeat unit spans residues 803–846 (EEECEPEELLKTPSKDSLDPDPRCLLTNGKLPLWAKRLLGDDDV). The segment covering 810-824 (ELLKTPSKDSLDPDP) has biased composition (basic and acidic residues). Phosphoserine is present on residues Ser-966 and Ser-972. The disordered stretch occupies residues 1000–1072 (VSSVSSKDQS…GLGNGSLPQT (73 aa)). Thr-1072 is modified (phosphothreonine). A phosphoserine mark is found at Ser-1117, Ser-1143, and Ser-1169. The tract at residues 1143–1258 (SPEAQPVGQG…SLHKPLSPGQ (116 aa)) is disordered. 2 stretches are compositionally biased toward polar residues: residues 1167-1177 (YMSSDGTNVLS) and 1199-1213 (TSVL…ISAP). Over residues 1214 to 1225 (SSCSYLESTTSS) the composition is skewed to low complexity. The span at 1226–1235 (HAKTTRSISL) shows a compositional bias: polar residues. Ser-1234 is subject to Phosphoserine.

Can form homodimers (via C-terminus). Interacts (via C-terminus) with MAPKBP1 (via C-terminus). Interacts with CDK5RAP2, CEP152, CEP63 and KIAA0753. CEP63, CDK5RAP2, CEP152, WDR62 are proposed to form a stepwise assembled complex at the centrosome forming a ring near parental centrioles. As to expression, prominent in neural crest lineages from 9.5 dpc to 11.5 dpc. Also expressed in the ventricular and subventricular zones during the period of cerebral cortical neurogenesis (11.5-16.5 dpc), with expression decreasing in intensity by 17.5 dpc. In the cerebellum, it is strongly expressed in precursors of granule neurons at late embryonic and early postnatal stages; by postnatal day 9 (P9). Present in fetal brain, enriched within the ventricular and subventricular zone (at protein level).

Its subcellular location is the nucleus. The protein localises to the cytoplasm. The protein resides in the cytoskeleton. It is found in the spindle pole. It localises to the microtubule organizing center. Its subcellular location is the centrosome. The protein localises to the centriole. Functionally, required for cerebral cortical development. Plays a role in neuronal proliferation and migration. Plays a role in mother-centriole-dependent centriole duplication; the function seems also to involve CEP152, CDK5RAP2 and CEP63 through a stepwise assembled complex at the centrosome that recruits CDK2 required for centriole duplication. The protein is WD repeat-containing protein 62 (Wdr62) of Mus musculus (Mouse).